A 525-amino-acid chain; its full sequence is GMP synthase [glutamine-hydrolyzing] (525 aa).

A Glutamine amidotransferase type-1 domain is found at 9-207; the sequence is RILILDFGSQ…VRDICQCEAL (199 aa). Residue C86 is the Nucleophile of the active site. Residues H181 and E183 contribute to the active site. The GMPS ATP-PPase domain occupies 208–400; that stretch reads WTPAKIIDDA…LGLPYDMLYR (193 aa). Residue 235–241 coordinates ATP; the sequence is SGGVDSS.

Homodimer.

The catalysed reaction is XMP + L-glutamine + ATP + H2O = GMP + L-glutamate + AMP + diphosphate + 2 H(+). The protein operates within purine metabolism; GMP biosynthesis; GMP from XMP (L-Gln route): step 1/1. Functionally, catalyzes the synthesis of GMP from XMP. This chain is GMP synthase [glutamine-hydrolyzing], found in Shigella boydii serotype 18 (strain CDC 3083-94 / BS512).